The following is a 364-amino-acid chain: uncharacterized protein (364 aa).

This is an uncharacterized protein from Saccharum officinarum (Sugarcane).